The primary structure comprises 1089 residues: SUMO-specific isopeptidase USPL1 (1089 aa).

The segment at 90–128 (LISPDSEDCPTPSKPQKRKRLETNCRNSPLPVHSKKTRS) is disordered. Residues 215-488 (VQWKNTQALC…ETHIVIWERK (274 aa)) enclose the USP domain. The active-site Nucleophile is the C224. Residues 224–483 (CWLDCILSAL…EVPASETHIV (260 aa)) are SUMO-binding. The Proton acceptor role is filled by H444. 4 disordered regions span residues 687 to 739 (DSQT…KEDQ), 791 to 817 (ISRR…SPPL), 835 to 868 (LREQ…AAED), and 891 to 928 (LISS…CGSP). The span at 719–733 (TASSKTVAARSAQNQ) shows a compositional bias: polar residues. The span at 791 to 803 (ISRRSKRMSRKAK) shows a compositional bias: basic residues. Position 894 is a phosphoserine (S894). Basic and acidic residues predominate over residues 895–907 (PHREPSLSDHSEP).

It belongs to the peptidase C19 family. Interacts with ELL.

The protein localises to the nucleus. It is found in the cajal body. Functionally, SUMO-specific isopeptidase involved in protein desumoylation. Specifically binds SUMO proteins with a higher affinity for SUMO2 and SUMO3 which it cleaves more efficiently. Also able to process full-length SUMO proteins to their mature forms. Plays a key role in RNA polymerase-II-mediated snRNA transcription in the Cajal bodies. Is a component of complexes that can bind to U snRNA genes. This chain is SUMO-specific isopeptidase USPL1 (Uspl1), found in Mus musculus (Mouse).